The following is a 187-amino-acid chain: HTH-type dhaKLM operon transcriptional activator DhaS (187 aa).

The 61-residue stretch at 12–72 (IITQKIIAKA…WIFENDFAEL (61 aa)) folds into the HTH tetR-type domain. The segment at residues 35–54 (SVSDIMQTAKIRRQTFYNYF) is a DNA-binding region (H-T-H motif).

In terms of assembly, homodimer. Interacts with a homodimer of DhaQ.

Functionally, in complex with DhaQ, upon activation by dihydroxyacetone, activates transcription of the dhaKLM operon. Binds the inverted repeat sequence 5'-GGACACATN(6)ATTTGTCC-3' located upstream of and partially overlapping with the -35 promoter sequence of the dhaKLM operon promoter. The polypeptide is HTH-type dhaKLM operon transcriptional activator DhaS (dhaS) (Lactococcus lactis subsp. lactis (strain IL1403) (Streptococcus lactis)).